A 584-amino-acid chain; its full sequence is MSFLRRHISLFRSQKQLIDVFAPVSPNLELAEIHRRVIEDQGPALLFHNVIGSSFPVLTNLFGTKHRVDQLFSQAPDNLIARVAHLISSTPKLSSLWKSRDLLKRISSLGLKKARFRRFPFVSMSSVNLDHLPLLTSWPEDGGAFLTLPLVYTESPTLTTPNLGMYRVQRFNQNTMGLHFQIQKGGGMHLYEAEQKKQNLPVSVFLSGNPFLTLSAIAPLPENVSELLFATFLQGAKLLYKKTNDHPHPLLYDAEFILVGESPAGKRRPEGPFGDHFGYYSLQHDFPEFHCHKIYHRKDAIYPATVVGKPYQEDFYIGNKLQEYLSPLFPLVMPGVRRLKSYGESGFHALTAAVVKERYWRESLTTALRILGEGQLSLTKFLMVTDQEVPLDRFSVVLETILERLQPDRDLIIFSETANDTLDYTGPSLNKGSKGIFMGIGKAIRDLPHGYQGGKIHGVQDIAPFCRGCLVLETSLEDRCIKSLLHHPDLKSWPLIILADNLRETIQSEKDFLWRTFTRCAPANDLHALHSHFATHRPNYNFPFVIDALMKPSYPKEVEVDPSTKQKVSERWHAYFPNKETFYI.

It belongs to the UbiD family. As to quaternary structure, component of the decarboxylase complex composed of the subunits B and C (Potential). The subunit D usually found in other organisms seems to be absent.

The catalysed reaction is 4-hydroxybenzoate + H(+) = phenol + CO2. Its activity is regulated as follows. The enzyme activity is enhanced by Mg(2+), Fe(2+), Mn(2+) and Ca(2+). No stimulation is observed with Cu(2+) and Zn(2+). Its function is as follows. Catalyzes the reversible decarboxylation of 4-hydroxybenzoate. The chain is 4-hydroxybenzoate decarboxylase subunit C from Chlamydia pneumoniae (Chlamydophila pneumoniae).